We begin with the raw amino-acid sequence, 76 residues long: uncharacterized protein (76 aa).

This is an uncharacterized protein from Thermoproteus tenax virus 1 (strain KRA1) (TTV1).